A 473-amino-acid chain; its full sequence is MRSYMQILQKFAKFIGPGILVSVAYMDPGNYATSVSGGAQYKYTLLFSIFISNIFAVLLQCLCVKLGTITGYDLAENCRHNLPKKLNYTLYLFAEVAIIATDLAEVVGTAIALQILFKIPLTWGVLLTVLDVLVILMFYTPNGQSLKKVRVFEFGVGILVIGTCICFVLELFKVSIPDKAELFKGFLPSNIIFKEQQALYISLGILGATVMPHSLYLGSSIVKPRLHDYDLKKYGKVNARPSLSAIKYTLNYAYAELIISLFLIATFVNSAILIVAGATLSGQPEAEDADLLSIYKLLVHYISPAAGLIFALAMLCSGQSAGIICTLAGQIVSEGFLQWSLPPWATRLCTRLIAIVPCLFVTLTMGEKGISDILNFSQVVLSLILPIVSAPLIYFTANRKLMVVHDENGVVRAPADVNAIADETTPLNSKHSKIVDFTNSRLLTYTSVFVWALIGSLNCYLVISYLLGADIHF.

The next 2 helical transmembrane spans lie at 14-34 (FIGP…YATS) and 44-64 (TLLF…CLCV). N-linked (GlcNAc...) asparagine glycosylation is present at Asn87. 9 helical membrane-spanning segments follow: residues 97 to 117 (AIIA…QILF), 119 to 139 (IPLT…LMFY), 152 to 172 (FEFG…LELF), 198 to 218 (ALYI…LYLG), 257 to 277 (LIIS…IVAG), 297 to 317 (LLVH…MLCS), 352 to 372 (LIAI…GISD), 373 to 393 (ILNF…APLI), and 448 to 468 (VFVW…YLLG).

It belongs to the NRAMP family.

Its subcellular location is the vacuole membrane. It localises to the endoplasmic reticulum membrane. Functionally, has a role in controlling the cellular iron ion levels. Mobilizes vacuolar stores of iron in conditions of low iron levels. This chain is Iron transporter SMF3 (SMF3), found in Saccharomyces cerevisiae (strain ATCC 204508 / S288c) (Baker's yeast).